We begin with the raw amino-acid sequence, 279 residues long: Odontogenic ameloblast-associated protein (279 aa).

An N-terminal signal peptide occupies residues Met-1 to Ser-15. O-linked (GalNAc...) threonine glycans are attached at residues Thr-115 and Thr-119. The segment at Met-127–Tyr-129 is interaction with ARHGEF5. The span at Ser-243 to Thr-263 shows a compositional bias: polar residues. The tract at residues Ser-243 to Pro-279 is disordered. O-linked (GalNAc...) threonine glycosylation occurs at Thr-244. O-linked (GalNAc...) serine glycosylation occurs at Ser-249. Residues Thr-250, Thr-251, and Thr-255 are each glycosylated (O-linked (GalNAc...) threonine). The O-linked (GalNAc...) serine glycan is linked to Ser-256. Residues Thr-261, Thr-263, and Thr-273 are each glycosylated (O-linked (GalNAc...) threonine). The span at Pro-267 to Pro-279 shows a compositional bias: basic and acidic residues. O-linked (GalNAc...) serine glycosylation occurs at Ser-275.

Belongs to the ODAM family. Interacts (via C-terminus) with ARHGEF5. Post-translationally, O-glycosylated. Expressed in the junctional epithelium of healthy teeth. In periodontitis, absent in the pocket epithelium of the diseased periodontium but is detected in the gingival crevicular fluid.

Its subcellular location is the secreted. It is found in the cytoplasm. The protein resides in the nucleus. In terms of biological role, tooth-associated epithelia protein that probably plays a role in odontogenesis, the complex process that results in the initiation and generation of the tooth. May be incorporated in the enamel matrix at the end of mineralization process. Involved in the induction of RHOA activity via interaction with ARHGEF and expression of downstream factors such as ROCK. Plays a role in attachment of the junctional epithelium to the tooth surface. The sequence is that of Odontogenic ameloblast-associated protein (ODAM) from Homo sapiens (Human).